Here is a 508-residue protein sequence, read N- to C-terminus: U4/U6 small nuclear ribonucleoprotein Prp31 (508 aa).

Residues 1 to 45 (MSLADELLADLEEAGEEDGLYPGGEEGESDGEPGERQVDGGLEDI) form a disordered region. Residues 7-32 (LLADLEEAGEEDGLYPGGEEGESDGE) show a composition bias toward acidic residues. 2 coiled-coil regions span residues 96-131 (EADP…KYSK) and 192-226 (DDEL…MSFI). In terms of domain architecture, Nop spans 226 to 344 (IAPNLSIIVG…IERKFDKWQE (119 aa)). Disordered regions lie at residues 345–368 (PPPV…RGGR) and 442–461 (QSMT…GTSS). The Nuclear localization signal (NLS) signature appears at 362 to 375 (RKKRGGRRYRKMKE).

Belongs to the PRP31 family. In terms of assembly, identified in the spliceosome B complex. Component of the U4/U6-U5 tri-snRNP complex. Component of some MLL1/MLL complex.

It is found in the nucleus. The protein localises to the nucleus speckle. Its subcellular location is the cajal body. In terms of biological role, involved in pre-mRNA splicing as component of the spliceosome. Required for the assembly of the U4/U5/U6 tri-snRNP complex, one of the building blocks of the spliceosome. This is U4/U6 small nuclear ribonucleoprotein Prp31 (prpf31) from Danio rerio (Zebrafish).